A 7094-amino-acid polypeptide reads, in one-letter code: Replicase polyprotein 1ab (7094 aa).

Residues proline 54 to glycine 196 enclose the CoV Nsp1 globular domain. Positions phenylalanine 216–glycine 246 constitute a BetaCoV Nsp1 C-terminal domain. The 270-residue stretch at leucine 250–tyrosine 519 folds into the CoV Nsp2 N-terminal domain. Residues cysteine 392, cysteine 397, cysteine 413, and cysteine 416 each coordinate Zn(2+). Residues cysteine 392–cysteine 416 form a C4 region. The 190-residue stretch at cysteine 524–valine 713 folds into the CoV Nsp2 middle domain. The region spanning arginine 733 to alanine 851 is the CoV Nsp2 C-terminal domain. Residues arginine 853 to aspartate 966 enclose the Ubiquitin-like 1 domain. A Peptidase C16 1 domain is found at aspartate 1036–threonine 1274. Cysteine 1074 serves as the catalytic For PL1-PRO activity. Residues cysteine 1151, cysteine 1154, cysteine 1177, and cysteine 1179 each coordinate Zn(2+). A C4-type 1 zinc finger spans residues cysteine 1151 to cysteine 1179. Catalysis depends on for PL1-PRO activity residues histidine 1225 and aspartate 1236. Residues proline 1275–valine 1435 enclose the Macro domain. Residues aspartate 1491–aspartate 1563 enclose the DPUP domain. One can recognise a Ubiquitin-like 2 domain in the interval leucine 1562–glutamine 1617. Residues serine 1631–glutamine 1892 enclose the Peptidase C16 2 domain. The active-site For PL2-PRO activity is the cysteine 1671. Residues cysteine 1749, cysteine 1751, cysteine 1783, and cysteine 1785 each contribute to the Zn(2+) site. The C4-type 2 zinc finger occupies cysteine 1749 to cysteine 1785. Residues histidine 1828 and aspartate 1842 each act as for PL2-PRO activity in the active site. The Nucleic acid-binding domain maps to isoleucine 1906 to aspartate 2007. The G2M domain maps to aspartate 2020–glutamate 2169. The next 3 helical transmembrane spans lie at isoleucine 2138–isoleucine 2158, alanine 2199–phenylalanine 2219, and isoleucine 2227–leucine 2247. An HD1 region spans residues isoleucine 2138 to phenylalanine 2385. Residues glycine 2235 to aspartate 2296 enclose the 3Ecto domain. Intrachain disulfides connect cysteine 2251-cysteine 2275 and cysteine 2266-cysteine 2272. The next 3 membrane-spanning stretches (helical) occupy residues leucine 2313 to isoleucine 2333, leucine 2343 to leucine 2363, and alanine 2365 to phenylalanine 2385. Residues serine 2383–aspartate 2473 are Y1. Residues serine 2383–glycine 2750 enclose the CoV Nsp3 Y domain. Residues histidine 2387, cysteine 2392, cysteine 2397, cysteine 2400, cysteine 2433, histidine 2436, cysteine 2440, and cysteine 2443 each contribute to the Zn(2+) site. Residues histidine 2387 to cysteine 2400 are ZF1. The ZF2 stretch occupies residues cysteine 2433–cysteine 2443. The tract at residues valine 2474–alanine 2566 is Y2. Residues valine 2474–glycine 2750 are coV-Y. The Y3 stretch occupies residues asparagine 2567–glycine 2649. Positions leucine 2650–glycine 2750 are Y4. Helical transmembrane passes span valine 2752–tryptophan 2772, serine 2824–valine 2844, valine 3009–leucine 3029, alanine 3031–isoleucine 3051, isoleucine 3063–valine 3083, valine 3090–methionine 3110, and leucine 3115–valine 3135. Residues valine 2752–valine 3135 are HD2. The Nsp4C domain occupies leucine 3149–glutamine 3246. The Peptidase C30 domain occupies serine 3247–glutamine 3549. Active-site for 3CL-PRO activity residues include histidine 3287 and cysteine 3391. The next 7 helical transmembrane spans lie at glycine 3558–valine 3578, threonine 3588–valine 3608, tyrosine 3614–valine 3634, threonine 3657–leucine 3677, leucine 3684–glycine 3704, isoleucine 3711–alanine 3731, and isoleucine 3755–serine 3775. Residues glycine 3558–serine 3775 are HD3. The RdRp Nsp7 cofactor domain occupies serine 3837–glutamine 3925. In terms of domain architecture, RdRp Nsp8 cofactor spans alanine 3926 to glutamine 4122. In terms of domain architecture, Nsp9 ssRNA-binding spans asparagine 4123–glutamine 4232. The ExoN/MTase coactivator domain occupies alanine 4233 to serine 4370. Cysteine 4306, cysteine 4309, histidine 4315, cysteine 4322, cysteine 4348, cysteine 4351, cysteine 4359, and cysteine 4361 together coordinate Zn(2+). 2 zinc fingers span residues cysteine 4306 to cysteine 4322 and cysteine 4348 to cysteine 4361. A NiRAN domain is found at phenylalanine 4375–tyrosine 4630. The Mn(2+) site is built by asparagine 4578 and aspartate 4587. The Nsp12 Interface domain maps to arginine 4631–tyrosine 4729. Zn(2+)-binding residues include histidine 4660, cysteine 4666, cysteine 4671, cysteine 4675, and cysteine 4852. Positions arginine 4730 to glutamine 5297 constitute a Nsp12 RNA-dependent RNA polymerase domain. The rdRp Fingers N-ter stretch occupies residues serine 4732–alanine 4946. A rdRp Palm N-ter region spans residues threonine 4947–proline 4985. The region spanning proline 4977–glycine 5139 is the RdRp catalytic domain. Residues lysine 4986–glycine 5044 are rdRp Fingers C-ter. Residues histidine 5007, cysteine 5010, and cysteine 5011 each coordinate Zn(2+). Positions threonine 5045 to glutamine 5180 are rdRp Palm C-ter. Residues serine 5124, aspartate 5125, and aspartate 5126 contribute to the active site. The tract at residues histidine 5181–glutamine 5297 is rdRp Thumb. The region spanning serine 5298–lysine 5410 is the CV ZBD domain. Positions 5302, 5305, 5313, 5316, 5323, 5326, 5330, 5336, 5347, 5352, 5369, and 5372 each coordinate Zn(2+). The (+)RNA virus helicase ATP-binding domain occupies serine 5553–leucine 5734. Glycine 5578–serine 5585 is an ATP binding site. A (+)RNA virus helicase C-terminal domain is found at glycine 5735 to asparagine 5904. An ExoN domain is found at leucine 5971 to cysteine 6186. Active-site residues include aspartate 5989, glutamate 5991, and glutamate 6090. The Zn(2+) site is built by cysteine 6106, cysteine 6109, cysteine 6125, histidine 6128, histidine 6156, cysteine 6160, and histidine 6163. Active-site residues include histidine 6167 and aspartate 6172. Residue cysteine 6178 participates in Zn(2+) binding. The N7-MTase domain maps to tyrosine 6195 to glutamine 6421. Position 6230 to 6236 (aspartate 6230 to alanine 6236) interacts with S-adenosyl-L-methionine. Positions cysteine 6308–threonine 6322 are gpppA-binding. Residues cysteine 6346, cysteine 6367, cysteine 6378, and histidine 6381 each contribute to the Zn(2+) site. The Nsp15 N-terminal oligomerization domain maps to serine 6422–arginine 6482. The region spanning serine 6483–valine 6603 is the AV-Nsp11N/CoV-Nsp15M domain. In terms of domain architecture, NendoU spans threonine 6653–proline 6792. Active-site residues include histidine 6683, histidine 6698, lysine 6738, lysine 6841, aspartate 6925, lysine 6965, and glutamate 6998. One can recognise a Nidovirus-type SAM-dependent 2'-O-MTase domain in the interval alanine 6797–valine 7091.

This sequence belongs to the coronaviruses polyprotein 1ab family. In terms of assembly, interacts with host PHB and PHB2. As to quaternary structure, interacts with papain-like protease nsp3 and non-structural protein 6. Monomer. Homodimer. Only the homodimer shows catalytic activity. In terms of assembly, interacts with nsp8 and nsp12 to form the replication-transcription complex (RTC): nsp12, nsp7, two subunits of nsp8, and up to two subunits of nsp13. As to quaternary structure, interacts with nsp7, nsp13 and nsp12 to form the replication-transcription complex (RTC): nsp12, nsp7, two subunits of nsp8, and up to two subunits of nsp13. Interacts with nsp12. In terms of assembly, interacts with proofreading exoribonuclease nsp14 and 2'-O-methyltransferase nsp16; these interactions enhance nsp14 and nsp16 enzymatic activities. As to quaternary structure, interacts with nsp7 and nsp8 to form the replication-transcription complex (RTC): nsp12, nsp7, two subunits of nsp8, and up to two subunits of nsp13. Interacts with nsp9. Interacts with nsp8 to form the replication-transcription complex (RTC): nsp12, nsp7, two subunits of nsp8, and up to two subunits of nsp13. Mn(2+) serves as cofactor. The cofactor is Mg(2+). In terms of processing, specific enzymatic cleavages in vivo by its own proteases yield mature proteins. 3CL-PRO and PL-PRO proteinases are autocatalytically processed.

It localises to the host membrane. Its subcellular location is the host cytoplasm. The protein localises to the host perinuclear region. The protein resides in the host endoplasmic reticulum-Golgi intermediate compartment. It carries out the reaction RNA(n) + a ribonucleoside 5'-triphosphate = RNA(n+1) + diphosphate. It catalyses the reaction ATP + H2O = ADP + phosphate + H(+). The catalysed reaction is Thiol-dependent hydrolysis of ester, thioester, amide, peptide and isopeptide bonds formed by the C-terminal Gly of ubiquitin (a 76-residue protein attached to proteins as an intracellular targeting signal).. The enzyme catalyses a 5'-end (N(7)-methyl 5'-triphosphoguanosine)-ribonucleoside in mRNA + S-adenosyl-L-methionine = a 5'-end (N(7)-methyl 5'-triphosphoguanosine)-(2'-O-methyl-ribonucleoside) in mRNA + S-adenosyl-L-homocysteine + H(+). It carries out the reaction uridylyl-uridylyl-ribonucleotide-RNA = a 3'-end uridylyl-2',3'-cyclophospho-uridine-RNA + a 5'-end dephospho-ribonucleoside-RNA. It catalyses the reaction a 5'-end diphospho-ribonucleoside in mRNA + GTP + H(+) = a 5'-end (5'-triphosphoguanosine)-ribonucleoside in mRNA + diphosphate. The catalysed reaction is a 5'-end (5'-triphosphoguanosine)-ribonucleoside in mRNA + S-adenosyl-L-methionine = a 5'-end (N(7)-methyl 5'-triphosphoguanosine)-ribonucleoside in mRNA + S-adenosyl-L-homocysteine. In terms of biological role, the replicase polyprotein of coronaviruses is a multifunctional protein: it contains the activities necessary for the transcription of negative stranded RNA, leader RNA, subgenomic mRNAs and progeny virion RNA as well as proteinases responsible for the cleavage of the polyprotein into functional products. Its function is as follows. Inhibits host translation by interacting with the 40S ribosomal subunit. The nsp1-40S ribosome complex further induces an endonucleolytic cleavage near the 5'UTR of host mRNAs, targeting them for degradation. Viral mRNAs are not susceptible to nsp1-mediated endonucleolytic RNA cleavage thanks to the presence of a 5'-end leader sequence and are therefore protected from degradation. By suppressing host gene expression, nsp1 facilitates efficient viral gene expression in infected cells and evasion from host immune response. May play a role in the modulation of host cell survival signaling pathway by interacting with host PHB and PHB2. Indeed, these two proteins play a role in maintaining the functional integrity of the mitochondria and protecting cells from various stresses. Functionally, responsible for the cleavages located at the N-terminus of the replicase polyprotein. In addition, PL-PRO possesses a deubiquitinating/deISGylating activity and processes both 'Lys-48'- and 'Lys-63'-linked polyubiquitin chains from cellular substrates. Participates together with nsp4 in the assembly of virally-induced cytoplasmic double-membrane vesicles necessary for viral replication. Antagonizes innate immune induction of type I interferon by blocking the phosphorylation, dimerization and subsequent nuclear translocation of host IRF3. Also prevents host NF-kappa-B signaling. In terms of biological role, participates in the assembly of virally-induced cytoplasmic double-membrane vesicles necessary for viral replication. Its function is as follows. Cleaves the C-terminus of replicase polyprotein at 11 sites. Recognizes substrates containing the core sequence [ILMVF]-Q-|-[SGACN]. Also able to bind an ADP-ribose-1''-phosphate (ADRP). Plays a role in the initial induction of autophagosomes from host endoplasmic reticulum. Later, limits the expansion of these phagosomes that are no longer able to deliver viral components to lysosomes. Functionally, forms a hexadecamer with nsp8 (8 subunits of each) that may participate in viral replication by acting as a primase. Alternatively, may synthesize substantially longer products than oligonucleotide primers. In terms of biological role, forms a hexadecamer with nsp7 (8 subunits of each) that may participate in viral replication by acting as a primase. Alternatively, may synthesize substantially longer products than oligonucleotide primers. Its function is as follows. Forms a primer, NSP9-pU, which is utilized by the polymerase for the initiation of RNA chains. Interacts with ribosome signal recognition particle RNA (SRP). Together with NSP8, suppress protein integration into the cell membrane, thereby disrupting host immune defenses. Plays a pivotal role in viral transcription by stimulating both nsp14 3'-5' exoribonuclease and nsp16 2'-O-methyltransferase activities. Therefore plays an essential role in viral mRNAs cap methylation. Functionally, RNA-directed RNA polymerase that catalyzes the transcription of viral genomic and subgenomic RNAs. Acts in complex with nsp7 and nsp8 to transcribe both the minus and positive strands of genomic RNA. The kinase-like NiRAN domain of NSP12 attaches one or more nucleotides to the amino terminus of NSP9, forming a covalent RNA-protein intermediate that serves as transcription/replication primer. Subgenomic RNAs (sgRNAs) are formed by discontinuous transcription: The polymerase has the ability to pause at transcription-regulating sequences (TRS) and jump to the leader TRS, resulting in a major deletion. This creates a series of subgenomic RNAs that are replicated, transcribed and translated. In addition, Nsp12 is a subunit of the viral RNA capping enzyme that catalyzes the RNA guanylyltransferase reaction for genomic and sub-genomic RNAs. Subsequently, the NiRAN domain transfers RNA to GDP, and forms the core cap structure GpppA-RNA. In terms of biological role, multi-functional protein with a zinc-binding domain in N-terminus displaying RNA and DNA duplex-unwinding activities with 5' to 3' polarity. Activity of helicase is dependent on magnesium. Its function is as follows. Plays a role in viral RNA synthesis through two distinct activities. The N7-guanine methyltransferase activity plays a role in the formation of the cap structure GpppA-RNA. The proofreading exoribonuclease reduces the sensitivity of the virus to RNA mutagens during replication. This activity acts on both ssRNA and dsRNA in a 3'-5' direction. Plays a role in viral transcription/replication and prevents the simultaneous activation of host cell dsRNA sensors, such as MDA5/IFIH1, OAS, and PKR. Acts by degrading the 5'-polyuridines generated during replication of the poly(A) region of viral genomic and subgenomic RNAs. Catalyzes a two-step reaction in which a 2'3'-cyclic phosphate (2'3'-cP) is first generated by 2'-O transesterification, which is then hydrolyzed to a 3'-phosphate (3'-P). If not degraded, poly(U) RNA would hybridize with poly(A) RNA tails and activate host dsRNA sensors. Functionally, methyltransferase that mediates mRNA cap 2'-O-ribose methylation to the 5'-cap structure of viral mRNAs. N7-methyl guanosine cap is a prerequisite for binding of nsp16. Therefore plays an essential role in viral mRNAs cap methylation which is essential to evade immune system. This chain is Replicase polyprotein 1ab (rep), found in Bos taurus (Bovine).